A 127-amino-acid polypeptide reads, in one-letter code: Large ribosomal subunit protein uL22 (127 aa).

The protein belongs to the universal ribosomal protein uL22 family. Part of the 50S ribosomal subunit.

This protein binds specifically to 23S rRNA; its binding is stimulated by other ribosomal proteins, e.g. L4, L17, and L20. It is important during the early stages of 50S assembly. It makes multiple contacts with different domains of the 23S rRNA in the assembled 50S subunit and ribosome. In terms of biological role, the globular domain of the protein is located near the polypeptide exit tunnel on the outside of the subunit, while an extended beta-hairpin is found that lines the wall of the exit tunnel in the center of the 70S ribosome. The chain is Large ribosomal subunit protein uL22 from Methylobacterium sp. (strain 4-46).